The primary structure comprises 98 residues: UPF0473 protein GTNG_2486 (98 aa).

It belongs to the UPF0473 family.

The polypeptide is UPF0473 protein GTNG_2486 (Geobacillus thermodenitrificans (strain NG80-2)).